Reading from the N-terminus, the 1958-residue chain is Sodium channel protein type 10 subunit alpha (1958 aa).

Over 1 to 125 (MEFPFGSVGT…FNLIRRTAIK (125 aa)) the chain is Cytoplasmic. Residues 27–54 (QIAAHRAAKKGRPKQRGQKDKSEKPRPQ) are disordered. Residues 32-42 (RAAKKGRPKQR) are compositionally biased toward basic residues. The segment covering 43–54 (GQKDKSEKPRPQ) has biased composition (basic and acidic residues). The I repeat unit spans residues 116–404 (FNLIRRTAIK…VTMAYEEQSQ (289 aa)). The chain crosses the membrane as a helical span at residues 126–149 (VSVHSWFSIFITVTILVNCVCMTR). At 150–154 (TDLPE) the chain is on the extracellular side. The chain crosses the membrane as a helical span at residues 155 to 174 (KLEYAFTVVYTFEALIKILA). The Cytoplasmic segment spans residues 175–187 (RGFCLNEFTYLRD). Residues 188–206 (PWNWLDFSVITLAYVGAAI) form a helical membrane-spanning segment. The Extracellular portion of the chain corresponds to 207–212 (DLRGIS). The chain crosses the membrane as a helical; Voltage-sensor span at residues 213–232 (GLRTFRVLRALKTVSVIPGL). Residues 233–248 (KVIVGALIHSVRKLAD) are Cytoplasmic-facing. A helical membrane pass occupies residues 249–272 (VTILTVFCLSVFALVGLQLFKGNL). Topologically, residues 273–340 (KNKCIKNGTD…PDFNYTSFDS (68 aa)) are extracellular. Cysteine 276 and cysteine 318 are disulfide-bonded. Residues asparagine 279, asparagine 288, asparagine 311, and asparagine 334 are each glycosylated (N-linked (GlcNAc...) asparagine). An intramembrane region (pore-forming) is located at residues 341–365 (FAWAFLSLFRLMTQDSWERLYQQTL). Residues 366–372 (RASGKMY) are Extracellular-facing. The helical transmembrane segment at 373–398 (MVFFVLVIFLGSFYLVNLILAVVTMA) threads the bilayer. Residues 399 to 658 (YEEQSQATIA…KWKKFKMVLF (260 aa)) lie on the Cytoplasmic side of the membrane. Residues serine 440, serine 443, serine 466, and serine 478 each carry the phosphoserine modification. Disordered stretches follow at residues 444 to 483 (HNGSPLAPKNANERRPRVKSRMSEGSTDDNRSLQSDPYNQ) and 539 to 583 (GRGA…APEG). Positions 549 to 560 (PRSPLPQSPNPG) are enriched in pro residues. Serine 611 and serine 614 each carry phosphoserine. Residues 646 to 910 (CCPKWKKFKM…EDDGEVNNLQ (265 aa)) form an II repeat. Residues 659–683 (ELVTDPFAELTITLCIVVNTVFMAM) form a helical membrane-spanning segment. The Extracellular portion of the chain corresponds to 684-694 (EHYPMTDAFDA). Residues 695–718 (MLQAGNIVFTVFFTMEMAFKIIAF) traverse the membrane as a helical segment. Topologically, residues 719 to 726 (DPYYYFQK) are cytoplasmic. The chain crosses the membrane as a helical span at residues 727–746 (KWNIFDCVIVTVSLLELSTS). Over 747–752 (KKGSLS) the chain is Extracellular. Residues 753–772 (VLRTFRLLRVFKLAKSWPTL) traverse the membrane as a helical; Voltage-sensor segment. Over 773–788 (NMLIKIIGNSVGALGN) the chain is Cytoplasmic. Residues 789-809 (LTFILAIIVFIFALVGKQLLS) traverse the membrane as a helical segment. Over 810–833 (ENYGCRRDGISVWNGERLRWHMCD) the chain is Extracellular. The pore-forming intramembrane region spans 834-854 (FFHSFLVVFRILCGEWIENMW). Topologically, residues 855 to 863 (VCMEVSQDY) are extracellular. A disulfide bridge connects residues cysteine 856 and cysteine 865. A helical membrane pass occupies residues 864 to 889 (ICLTLFLTVMVLGNLVVLNLFIALLL). At 890–1148 (NSFSADNLTA…GWQVRKTCYR (259 aa)) the chain is on the cytoplasmic side. The segment at 1006–1094 (DLDELEEDVE…SEGSTVDCPD (89 aa)) is disordered. Positions 1017 to 1038 (ASQSSWQEESPKGQQELLQQVQ) are enriched in polar residues. The III repeat unit spans residues 1141-1450 (QVRKTCYRIV…KKYYNAMKKL (310 aa)). A helical membrane pass occupies residues 1149–1172 (IVEHSWFESFIIFMILLSSGALAF). Residues 1173–1185 (EDNYLEEKPRVKS) are Extracellular-facing. Residues 1186 to 1211 (VLEYTDRVFTFIFVFEMLLKWVAYGF) form a helical membrane-spanning segment. The Cytoplasmic segment spans residues 1212–1217 (KKYFTN). A helical transmembrane segment spans residues 1218–1239 (AWCWLDFLIVNISLTSLIAKIL). Over 1240 to 1243 (EYSD) the chain is Extracellular. Residues 1244 to 1265 (VASIKALRTLRALRPLRALSRF) traverse the membrane as a helical; Voltage-sensor segment. Residues 1266–1284 (EGMRVVVDALVGAIPSIMN) lie on the Cytoplasmic side of the membrane. Residues 1285–1312 (VLLVCLIFWLIFSIMGVNLFAGKFSRCV) traverse the membrane as a helical segment. Residues 1313–1354 (DTRSNPFSVVNSTFVTNKSDCYNQNNTGHFFWVNVKVNFDNV) are Extracellular-facing. Asparagine 1323, asparagine 1329, and asparagine 1337 each carry an N-linked (GlcNAc...) asparagine glycan. Residues 1355-1376 (AMGYLALLQVATFKGWMDIMYA) constitute an intramembrane region (pore-forming). Residues 1377 to 1392 (AVDSRDINSQPNWEES) lie on the Extracellular side of the membrane. Residues 1393-1419 (LYMYLYFVVFIIFGGFFTLNLFVGVII) traverse the membrane as a helical segment. Over 1420-1472 (DNFNQQKKKLGGQDIFMTEEQKKYYNAMKKLGSKKPQKPIPRPLNKYQGFVFD) the chain is Cytoplasmic. Phosphoserine; by PKC is present on serine 1452. The IV repeat unit spans residues 1459–1758 (IPRPLNKYQG…WEKFDPEATQ (300 aa)). A helical membrane pass occupies residues 1473–1496 (IVTRQAFDIIIMALICLNMITMMV). The Extracellular segment spans residues 1497–1507 (ETDNQSEEKTK). Asparagine 1500 is a glycosylation site (N-linked (GlcNAc...) asparagine). The helical transmembrane segment at 1508 to 1531 (VLGRINQFFVAVFTGECVMKMFAL) threads the bilayer. Residues 1532–1537 (RQYYFT) lie on the Cytoplasmic side of the membrane. The helical transmembrane segment at 1538–1561 (NGWNVFDFIVVILSISSLLFSAIL) threads the bilayer. The Extracellular segment spans residues 1562–1573 (SSLESYFSPTLL). Residues 1574 to 1595 (RVIRLARIGRILRLIRAAKGIR) form a helical; Voltage-sensor membrane-spanning segment. Topologically, residues 1596–1610 (TLLFALMMSLPALFN) are cytoplasmic. The chain crosses the membrane as a helical span at residues 1611–1633 (IGLLLFLVMFIYSIFGMASFANV). The Extracellular segment spans residues 1634-1647 (IDEAGIDDMFNFKT). An intramembrane region (pore-forming) is located at residues 1648–1670 (FGNSMLCLFQITTSAGWDGLLSP). The Extracellular segment spans residues 1671–1698 (ILNTGPPYCDPNRPNSNGSKGNCGSPAV). Asparagine 1687 is a glycosylation site (N-linked (GlcNAc...) asparagine). Residues 1699–1723 (GILFFTTYIIISFLIVVNMYIAVIL) traverse the membrane as a helical segment. Over 1724-1958 (ENFNVATEES…AKEGKSPGPQ (235 aa)) the chain is Cytoplasmic. The IQ domain maps to 1852–1881 (EDISATIIQKAYRNYMLQRSLMLSNPLHVP). The interval 1901 to 1958 (NDNGGLPDKSETASATSFPPSYDSVTRGLSDRANISTSSSMQNEDEVTAKEGKSPGPQ) is disordered. Over residues 1933-1942 (ANISTSSSMQ) the composition is skewed to polar residues. Positions 1947–1958 (VTAKEGKSPGPQ) are enriched in basic and acidic residues.

Belongs to the sodium channel (TC 1.A.1.10) family. Nav1.8/SCN10A subfamily. The channel consists of an ion conducting pore forming alpha-subunit regulated by one or more associated auxiliary subunits SCN1B, SCN2B and SCN3B; electrophysiological properties may vary depending on the type of the associated beta subunits. Found in a number of complexes with PRX, DYNLT1 and PDZD2. Interacts with proteins such as FSTL1, PRX, DYNLT1, PDZD2, S100A10 and many others. Interacts with NEDD4 and NEDD4L. Post-translationally, ubiquitinated by NEDD4L; which promotes its endocytosis. In terms of processing, phosphorylation at Ser-1452 by PKC in a highly conserved cytoplasmic loop slows inactivation of the sodium channel and reduces peak sodium currents. Lacks the cysteine which covalently binds the conotoxin GVIIJ. This cysteine (position 815) is speculated in other sodium channel subunits alpha to be implied in covalent binding with the sodium channel subunit beta-2 or beta-4. Expressed in dorsal root ganglion and trigeminal ganglion.

It is found in the cell membrane. It catalyses the reaction Na(+)(in) = Na(+)(out). In terms of biological role, tetrodotoxin-resistant channel that mediates the voltage-dependent sodium ion permeability of excitable membranes. Assuming opened or closed conformations in response to the voltage difference across the membrane, the protein forms a sodium-selective channel through which sodium ions may pass in accordance with their electrochemical gradient. Plays a role in neuropathic pain mechanisms. The protein is Sodium channel protein type 10 subunit alpha of Mus musculus (Mouse).